A 153-amino-acid polypeptide reads, in one-letter code: Deoxyuridine 5'-triphosphate nucleotidohydrolase (153 aa).

Residues 65 to 67 (RSG), asparagine 78, and 82 to 84 (TID) contribute to the substrate site. The tract at residues 132–153 (MTQRGEGGFGHTGISAVHPRTH) is disordered.

Belongs to the dUTPase family. The cofactor is Mg(2+).

The enzyme catalyses dUTP + H2O = dUMP + diphosphate + H(+). Its pathway is pyrimidine metabolism; dUMP biosynthesis; dUMP from dCTP (dUTP route): step 2/2. Functionally, this enzyme is involved in nucleotide metabolism: it produces dUMP, the immediate precursor of thymidine nucleotides and it decreases the intracellular concentration of dUTP so that uracil cannot be incorporated into DNA. This is Deoxyuridine 5'-triphosphate nucleotidohydrolase from Chlorobium limicola (strain DSM 245 / NBRC 103803 / 6330).